A 197-amino-acid polypeptide reads, in one-letter code: uncharacterized protein (197 aa).

This is an uncharacterized protein from Bacillus subtilis (strain 168).